A 124-amino-acid polypeptide reads, in one-letter code: U12-barytoxin-Tl1a (124 aa).

The signal sequence occupies residues 1 to 20 (MKTMIAWLVLLTFAAALCFA). Positions 21-78 (DEGLKQEHMNERKKSRFREDIPDEISEDLLLQEMEAMEAELLEKEMRMEENRNSREKR) are excised as a propeptide. Cystine bridges form between cysteine 79–cysteine 99, cysteine 86–cysteine 104, and cysteine 98–cysteine 118.

This sequence belongs to the neurotoxin 14 (magi-1) family. 04 (ICK-6) subfamily. In terms of tissue distribution, expressed by the venom gland.

Its subcellular location is the secreted. Ion channel inhibitor. In Trittame loki (Brush-footed trapdoor spider), this protein is U12-barytoxin-Tl1a.